The chain runs to 465 residues: Probable multidrug resistance protein NorM (465 aa).

Helical transmembrane passes span 61–83 (VLAGQFFFVVFIFGSGFSVAVVP), 104–126 (GMWVAIAYWLLALPIFFNAERIL), 141–163 (HYLAIAKFGLLPALLFYVLRGLV), 170–192 (GIILYVTIIMLVMNGLMAYVLVF), 202–224 (MNGAAVVAVIVNAFSFIFIVAYV), 251–273 (LRLGLPISITILAEVTLFAAASI), 283–305 (LAAHGIALQLASIAFMIPLGLSQ), 326–348 (ASIMIYAIACGIALCGGILFAAV), 368–390 (LAYASSLVVIAGIFQLVDGIQAV), 403–425 (IPAMLALISYWPIGLALAWTMAF), and 435–457 (WFGFVIGLSTAAVLLTVRFVLLV).

It belongs to the multi antimicrobial extrusion (MATE) (TC 2.A.66.1) family.

The protein localises to the cell inner membrane. Its function is as follows. Multidrug efflux pump. The sequence is that of Probable multidrug resistance protein NorM (norM) from Agrobacterium fabrum (strain C58 / ATCC 33970) (Agrobacterium tumefaciens (strain C58)).